The sequence spans 153 residues: Ribonuclease H (153 aa).

The 141-residue stretch at 1–141 (MKHVHIFTDG…ADELARKGME (141 aa)) folds into the RNase H type-1 domain. Residues aspartate 9, glutamate 47, aspartate 69, and aspartate 133 each coordinate Mg(2+). Residues 123–153 (HAGHPENERADELARKGMEPFKKARRADAVK) form a disordered region. A compositionally biased stretch (basic and acidic residues) spans 125 to 153 (GHPENERADELARKGMEPFKKARRADAVK).

This sequence belongs to the RNase H family. As to quaternary structure, monomer. The cofactor is Mg(2+).

The protein localises to the cytoplasm. It catalyses the reaction Endonucleolytic cleavage to 5'-phosphomonoester.. Its function is as follows. Endonuclease that specifically degrades the RNA of RNA-DNA hybrids. This Rhizobium meliloti (strain 1021) (Ensifer meliloti) protein is Ribonuclease H.